A 1449-amino-acid polypeptide reads, in one-letter code: MSDQESASLREEKNEIINGMGSGAPSDEEEGEDVFDSSEEEEEDDEDEARKISEGFIVNDEDEDEDEDDENVADKKKKRRHKRRAREEEDDRLSEDDLDLLMENAGVKRPTTEGSSGGKLKRLKRVGDEVESGAADREQESSQEKESSRLNDFFSDDEDEEPYDEENRERSRGSREYDRGESNHQGDNRKSGMLDELDDFIEEDEFSDEDEETRQQRLLERKMMREQRMKAPTKITGLSSDKIDEMYDVFGDGHDYDWALEIENEELEGGDINEQSEEFDEETGMTKSSKKKISLQDIYDLQDLKKNLMTDEDMLIRKTDIPERYQELRSGLVNHGNLSDNDQELEKNWISEKIAVDKNFSADYDLTEFKEAVGNAIKFITKENLEVPFIYAYRRNYISSRERDGFLLTEDDLWEIVHLDIEFQSIINKRDYVKRFYSELGISDPLVDEYFKNQSTGSVAELNSLQDIYNYLEFKYAQEINDNLQKESDKSGKKHLKNSNYEKFKSSALYKVIEAVGVSADQIGNNISSQHQIHIPKDHEALKPLELIELVLNENAGDLQVFLSNIKLAMDTIQKYYSWEISKNTKVREKVRADFYRYYLVDVVLTTKGKREIQRGSLYEDIKYAINRTPLHFRREPEIFLKMLEAESLNLMTLKLHMSSQKQYVDHLFQIALETTNTSDLAIEWNNFRKAAFTQAIEKIFNDIAQEIKDDLEKTCQKLVCKVVRHKFMTKLDQAPYVPDLKDPKLPKILTLTCGQGRFGSDAIIAAYVNRKGEFVRDFKITENPFDRSNPDKFEEVFEDIVQTCQITAIGINGPNPKTQKLFKKLIEVIHKKNLVDSKGTHIPIIYVEDEIAIRYQNSERAAQEFPNKPPYVKYCIALARYMHSPLMEYANLSPEELKSLSIHPFQSFLSPEYLNRAIETAFVDIVNLVGVEVNKATDNSYYASVLRFVSGFGKRKAIDFLESLQRLNEPLLARQQLITHNILHKVIFMNSAGFLYISWSKKRQRYEDLEHDQLDSTRIHPEDYHLATKVAADALEYDPDTIAEKEENGTMSEFIEFLREDPNRRSKLESLNLESYAEELEKNTGQRKLNNLNTIVLELLDGFEELRNDFHIMQSEEVFSSLTGETDKTLFKGCVIPVRVERFWHNDIVCVTNSEVECIVNAQRHLGAQVRRPPNEIYELNKTYPAKVIFIDYPNITAEVSLLEHDVKNEYNPLTYSKDPAIWDLKQELEDSEEEKKVTMAESRAKRTHRVINHPYYFPFNGKQAEDYLRSKERGDFVIRQSSRGDDHLAITWKLDKDLFQHVDIQELEKENPLALGKVLVVEGQRYHDLDQIIVEYLQNKIRLLNELTSNEKFKAGTKKEVVKFIEDYSKVNPKKSVYYFSLNYENPGWFYLIFKLNAESKLYIWNVKLTHTGFFLVNYNYPTVIQLCNGFKTLLKSSNTRNRSGYR.

Residues 1–214 form a disordered region; sequence MSDQESASLR…EFSDEDEETR (214 aa). Acidic residues-rich tracts occupy residues 26 to 47 and 59 to 71; these read SDEE…DDED and NDED…DDEN. The span at 75–84 shows a compositional bias: basic residues; it reads KKKKRRHKRR. Residues 88-100 are compositionally biased toward acidic residues; the sequence is EEDDRLSEDDLDL. Over residues 134–149 the composition is skewed to basic and acidic residues; the sequence is AADREQESSQEKESSR. A compositionally biased stretch (acidic residues) spans 154-164; that stretch reads FSDDEDEEPYD. Over residues 165-193 the composition is skewed to basic and acidic residues; it reads EENRERSRGSREYDRGESNHQGDNRKSGM. The segment covering 195 to 212 has biased composition (acidic residues); that stretch reads DELDDFIEEDEFSDEDEE. Positions 1256–1353 constitute an SH2 domain; the sequence is PYYFPFNGKQ…RLLNELTSNE (98 aa).

The protein belongs to the SPT6 family.

Its subcellular location is the nucleus. It localises to the chromosome. Its function is as follows. Histone H3-H4 chaperone that plays a role in maintenance of chromatin structure during RNA polymerase II transcription elongation thereby repressing transcription initiation from cryptic promoters. Mediates the reassembly of nucleosomes onto the promoters of at least a selected set of genes during repression; the nucleosome reassembly is essential for transcriptional repression. Essential for viability. In Candida glabrata (strain ATCC 2001 / BCRC 20586 / JCM 3761 / NBRC 0622 / NRRL Y-65 / CBS 138) (Yeast), this protein is Transcription elongation factor SPT6 (SPT6).